Here is a 200-residue protein sequence, read N- to C-terminus: Small ribosomal subunit protein uS4 (200 aa).

Positions 22-42 (TGKELEKRPYAPGPHGPNQRK) are disordered. The S4 RNA-binding domain maps to 92 to 152 (ARLDNLVYRM…EKSNNLVVVK (61 aa)).

Belongs to the universal ribosomal protein uS4 family. Part of the 30S ribosomal subunit. Contacts protein S5. The interaction surface between S4 and S5 is involved in control of translational fidelity.

One of the primary rRNA binding proteins, it binds directly to 16S rRNA where it nucleates assembly of the body of the 30S subunit. Functionally, with S5 and S12 plays an important role in translational accuracy. The polypeptide is Small ribosomal subunit protein uS4 (Bacillus thuringiensis subsp. konkukian (strain 97-27)).